The primary structure comprises 399 residues: Formate-dependent phosphoribosylglycinamide formyltransferase (399 aa).

Residues 8–9 (EL) and E68 contribute to the N(1)-(5-phospho-beta-D-ribosyl)glycinamide site. ATP contacts are provided by residues R100, K141, 146 to 151 (SSGHGQ), 185 to 188 (EALA), and E193. An ATP-grasp domain is found at 105–308 (VLAHEELGLP…EFALHARAIL (204 aa)). The Mg(2+) site is built by E266 and E279. N(1)-(5-phospho-beta-D-ribosyl)glycinamide-binding positions include D286, K361, and 368–369 (RR).

It belongs to the PurK/PurT family. Homodimer.

It catalyses the reaction N(1)-(5-phospho-beta-D-ribosyl)glycinamide + formate + ATP = N(2)-formyl-N(1)-(5-phospho-beta-D-ribosyl)glycinamide + ADP + phosphate + H(+). The protein operates within purine metabolism; IMP biosynthesis via de novo pathway; N(2)-formyl-N(1)-(5-phospho-D-ribosyl)glycinamide from N(1)-(5-phospho-D-ribosyl)glycinamide (formate route): step 1/1. In terms of biological role, involved in the de novo purine biosynthesis. Catalyzes the transfer of formate to 5-phospho-ribosyl-glycinamide (GAR), producing 5-phospho-ribosyl-N-formylglycinamide (FGAR). Formate is provided by PurU via hydrolysis of 10-formyl-tetrahydrofolate. The protein is Formate-dependent phosphoribosylglycinamide formyltransferase of Bifidobacterium adolescentis (strain ATCC 15703 / DSM 20083 / NCTC 11814 / E194a).